A 318-amino-acid polypeptide reads, in one-letter code: Peptidyl-prolyl cis-trans isomerase CPR4 (318 aa).

Positions 1–20 (MWLKSLLLCLYSLVLCQVHA) are cleaved as a signal peptide. Positions 55-225 (YFDPVSKSMK…HELRFLYFVL (171 aa)) constitute a PPIase cyclophilin-type domain. N166 is a glycosylation site (N-linked (GlcNAc...) asparagine). A helical membrane pass occupies residues 286-303 (ISRALMCLTVLGLCFIAY).

Its subcellular location is the membrane. It carries out the reaction [protein]-peptidylproline (omega=180) = [protein]-peptidylproline (omega=0). Its function is as follows. PPIases accelerate the folding of proteins. It catalyzes the cis-trans isomerization of proline imidic peptide bonds in oligopeptides. The protein is Peptidyl-prolyl cis-trans isomerase CPR4 (CPR4) of Saccharomyces cerevisiae (strain ATCC 204508 / S288c) (Baker's yeast).